The sequence spans 494 residues: UPF0371 protein str1377 (494 aa).

This sequence belongs to the UPF0371 family.

In Streptococcus thermophilus (strain CNRZ 1066), this protein is UPF0371 protein str1377.